Consider the following 470-residue polypeptide: Neuraminidase (470 aa).

The Intravirion segment spans residues 1–6 (MNPNQK). A helical membrane pass occupies residues 7 to 27 (IITIGSICMAIGIISLILQMG). The segment at 11–33 (GSICMAIGIISLILQMGNIISIW) is involved in apical transport and lipid raft association. At 28 to 470 (NIISIWVSHS…GAELPFTIDK (443 aa)) the chain is on the virion surface side. A hypervariable stalk region region spans residues 36–90 (HSIQTGSQNHTGICNQRIITYENSTWVNQTYVNINNTNVVAGKDTTSVTLAGNSS). N-linked (GlcNAc...) asparagine; by host glycosylation is found at Asn-44, Asn-58, Asn-63, Asn-70, and Asn-88. The segment at 91-470 (LCPIRGWAIY…GAELPFTIDK (380 aa)) is head of neuraminidase. 8 disulfide bridges follow: Cys-92/Cys-417, Cys-124/Cys-129, Cys-184/Cys-231, Cys-233/Cys-238, Cys-279/Cys-292, Cys-281/Cys-290, Cys-318/Cys-335, and Cys-421/Cys-447. Arg-118 is a binding site for substrate. Asn-146 is a glycosylation site (N-linked (GlcNAc...) asparagine; by host). The active-site Proton donor/acceptor is Asp-151. Arg-152 contributes to the substrate binding site. Asn-235 carries an N-linked (GlcNAc...) asparagine; by host glycan. 277–278 (EE) serves as a coordination point for substrate. A substrate-binding site is contributed by Arg-293. Ca(2+) contacts are provided by Asp-294, Gly-298, and Asp-324. N-linked (GlcNAc...) asparagine; by host glycosylation is present at Asn-365. A substrate-binding site is contributed by Arg-368. Tyr-402 (nucleophile) is an active-site residue. Asn-455 is a glycosylation site (N-linked (GlcNAc...) asparagine; by host).

It belongs to the glycosyl hydrolase 34 family. As to quaternary structure, homotetramer. The cofactor is Ca(2+). N-glycosylated.

The protein localises to the virion membrane. The protein resides in the host apical cell membrane. The enzyme catalyses Hydrolysis of alpha-(2-&gt;3)-, alpha-(2-&gt;6)-, alpha-(2-&gt;8)- glycosidic linkages of terminal sialic acid residues in oligosaccharides, glycoproteins, glycolipids, colominic acid and synthetic substrates.. Its activity is regulated as follows. Inhibited by the neuraminidase inhibitors zanamivir (Relenza) and oseltamivir (Tamiflu). These drugs interfere with the release of progeny virus from infected cells and are effective against all influenza strains. Resistance to neuraminidase inhibitors is quite rare. Its function is as follows. Catalyzes the removal of terminal sialic acid residues from viral and cellular glycoconjugates. Cleaves off the terminal sialic acids on the glycosylated HA during virus budding to facilitate virus release. Additionally helps virus spread through the circulation by further removing sialic acids from the cell surface. These cleavages prevent self-aggregation and ensure the efficient spread of the progeny virus from cell to cell. Otherwise, infection would be limited to one round of replication. Described as a receptor-destroying enzyme because it cleaves a terminal sialic acid from the cellular receptors. May facilitate viral invasion of the upper airways by cleaving the sialic acid moieties on the mucin of the airway epithelial cells. Likely to plays a role in the budding process through its association with lipid rafts during intracellular transport. May additionally display a raft-association independent effect on budding. Plays a role in the determination of host range restriction on replication and virulence. Sialidase activity in late endosome/lysosome traffic seems to enhance virus replication. This is Neuraminidase from Aves (Human).